We begin with the raw amino-acid sequence, 192 residues long: UPF0149 protein Spro_3920 (192 aa).

The protein belongs to the UPF0149 family.

In Serratia proteamaculans (strain 568), this protein is UPF0149 protein Spro_3920.